Consider the following 439-residue polypeptide: Xaa-Pro dipeptidase (439 aa).

Positions 244, 255, 335, 380, and 419 each coordinate Mn(2+).

The protein belongs to the peptidase M24B family. Bacterial-type prolidase subfamily. Requires Mn(2+) as cofactor.

It catalyses the reaction Xaa-L-Pro dipeptide + H2O = an L-alpha-amino acid + L-proline. Functionally, splits dipeptides with a prolyl residue in the C-terminal position. The polypeptide is Xaa-Pro dipeptidase (Shewanella sp. (strain ANA-3)).